A 588-amino-acid polypeptide reads, in one-letter code: Adenylate kinase 5, chloroplastic (588 aa).

Positions methionine 1–leucine 34 are disordered. The N-terminal 73 residues, methionine 1–arginine 73, are a transit peptide targeting the chloroplast. Alanine 89–threonine 94 contacts ATP. The NMP stretch occupies residues serine 109–valine 138. AMP-binding positions include arginine 115, serine 136 to valine 138, glycine 165 to arginine 168, and glutamine 172. An LID region spans residues glycine 202–aspartate 235. Residue arginine 203 participates in ATP binding. 2 residues coordinate AMP: arginine 232 and arginine 243.

It belongs to the adenylate kinase family. Monomer.

The protein localises to the plastid. Its subcellular location is the chloroplast. The enzyme catalyses AMP + ATP = 2 ADP. Catalyzes the reversible transfer of the terminal phosphate group between ATP and AMP. This is Adenylate kinase 5, chloroplastic from Arabidopsis thaliana (Mouse-ear cress).